Here is a 283-residue protein sequence, read N- to C-terminus: Elongation factor Ts (283 aa).

Residues 80-83 are involved in Mg(2+) ion dislocation from EF-Tu; it reads TDFV.

Belongs to the EF-Ts family.

It is found in the cytoplasm. Functionally, associates with the EF-Tu.GDP complex and induces the exchange of GDP to GTP. It remains bound to the aminoacyl-tRNA.EF-Tu.GTP complex up to the GTP hydrolysis stage on the ribosome. This chain is Elongation factor Ts, found in Shigella boydii serotype 18 (strain CDC 3083-94 / BS512).